Here is a 172-residue protein sequence, read N- to C-terminus: MSEENNSQNSNPPNPENGEIASEIQKLQEQAEKFKNDYLYLRAEFENYKRNAIKERSELMKYGGERLVRDLLEVVDNFDRALSVNVSAENFNTFKQGVDMTAQELKSLLQRHNVIEIPAHGAPFDPSVHEALSSEATDQMAPGHIVRVFKKPYKLHDKVIRPGQVVVAKKPE.

The segment covering 1-11 (MSEENNSQNSN) has biased composition (low complexity). The disordered stretch occupies residues 1-22 (MSEENNSQNSNPPNPENGEIAS).

The protein belongs to the GrpE family. As to quaternary structure, homodimer.

The protein resides in the cytoplasm. Participates actively in the response to hyperosmotic and heat shock by preventing the aggregation of stress-denatured proteins, in association with DnaK and GrpE. It is the nucleotide exchange factor for DnaK and may function as a thermosensor. Unfolded proteins bind initially to DnaJ; upon interaction with the DnaJ-bound protein, DnaK hydrolyzes its bound ATP, resulting in the formation of a stable complex. GrpE releases ADP from DnaK; ATP binding to DnaK triggers the release of the substrate protein, thus completing the reaction cycle. Several rounds of ATP-dependent interactions between DnaJ, DnaK and GrpE are required for fully efficient folding. The protein is Protein GrpE of Bdellovibrio bacteriovorus (strain ATCC 15356 / DSM 50701 / NCIMB 9529 / HD100).